We begin with the raw amino-acid sequence, 309 residues long: Polyprenal reductase (309 aa).

The next 7 membrane-spanning stretches (helical) occupy residues 12-32 (LPLY…FTLI), 72-92 (FYAI…SLIY), 114-134 (IPPI…LHVA), 151-171 (MNLF…ISIM), 184-204 (LHVS…LFWI), 242-262 (LVSC…FLVI), and 270-290 (FIIM…HSWY).

The protein belongs to the steroid 5-alpha reductase family. Polyprenal reductase subfamily.

It is found in the endoplasmic reticulum membrane. The catalysed reaction is a di-trans,poly-cis-dolichal + NADP(+) = a di-trans,poly-cis-polyprenal + NADPH + H(+). It functions in the pathway protein modification; protein glycosylation. Plays a key role in early steps of protein N-linked glycosylation by being involved in the conversion of polyprenol into dolichol. Acts as a polyprenal reductase that mediates the reduction of polyprenal into dolichal in a NADP-dependent mechanism. Dolichols are required for the synthesis of dolichol-linked monosaccharides and the oligosaccharide precursor used for N-glycosylation. In Caenorhabditis elegans, this protein is Polyprenal reductase.